Consider the following 403-residue polypeptide: Argininosuccinate synthase (403 aa).

An ATP-binding site is contributed by 10 to 18 (AYSGGLDTS). Residue Tyr-87 coordinates L-citrulline. Gly-117 contributes to the ATP binding site. L-aspartate is bound by residues Thr-119, Asn-123, and Asp-124. Residue Asn-123 coordinates L-citrulline. Arg-127, Ser-175, Glu-260, and Tyr-272 together coordinate L-citrulline.

Belongs to the argininosuccinate synthase family. Type 1 subfamily. As to quaternary structure, homotetramer.

It is found in the cytoplasm. It carries out the reaction L-citrulline + L-aspartate + ATP = 2-(N(omega)-L-arginino)succinate + AMP + diphosphate + H(+). The protein operates within amino-acid biosynthesis; L-arginine biosynthesis; L-arginine from L-ornithine and carbamoyl phosphate: step 2/3. In Bacillus velezensis (strain DSM 23117 / BGSC 10A6 / LMG 26770 / FZB42) (Bacillus amyloliquefaciens subsp. plantarum), this protein is Argininosuccinate synthase.